Reading from the N-terminus, the 270-residue chain is NADPH-dependent 7-cyano-7-deazaguanine reductase (270 aa).

79 to 81 (IES) is a substrate binding site. Residue 81-82 (SK) participates in NADPH binding. Cys177 functions as the Thioimide intermediate in the catalytic mechanism. The active-site Proton donor is Asp184. 216-217 (HE) is a binding site for substrate. Position 245-246 (245-246 (RG)) interacts with NADPH.

This sequence belongs to the GTP cyclohydrolase I family. QueF type 2 subfamily. In terms of assembly, homodimer.

It localises to the cytoplasm. The catalysed reaction is 7-aminomethyl-7-carbaguanine + 2 NADP(+) = 7-cyano-7-deazaguanine + 2 NADPH + 3 H(+). Its pathway is tRNA modification; tRNA-queuosine biosynthesis. Functionally, catalyzes the NADPH-dependent reduction of 7-cyano-7-deazaguanine (preQ0) to 7-aminomethyl-7-deazaguanine (preQ1). The protein is NADPH-dependent 7-cyano-7-deazaguanine reductase of Acinetobacter baumannii (strain SDF).